The primary structure comprises 347 residues: NADH-ubiquinone oxidoreductase chain 2 (347 aa).

A run of 11 helical transmembrane segments spans residues 3-23, 25-45, 59-79, 96-116, 122-142, 149-169, 178-198, 200-220, 240-260, 274-294, and 326-346; these read PMTSTILLMTIMSGTSIVLMS, HWFMTWLGFEMNMMAIIPILM, YFLTQATASMILVLAIIINLM, TLITIALVMKLGLAPFHFWVP, VSLSSGLILLTWQKIAPLSLL, INTNLLLTMSLLSIMIGGWGG, IMAYSSIAHMGWMIVIMIYNP, LSLLNLFIYIMMTSSMFMLLI, ITTMMMATLLSLGGLPPLTGF, NSVILPTLMAILALLNLFFYM, and MTMLISISTLALPLTPLFISL.

This sequence belongs to the complex I subunit 2 family. As to quaternary structure, core subunit of respiratory chain NADH dehydrogenase (Complex I) which is composed of 45 different subunits. Interacts with TMEM242.

Its subcellular location is the mitochondrion inner membrane. It catalyses the reaction a ubiquinone + NADH + 5 H(+)(in) = a ubiquinol + NAD(+) + 4 H(+)(out). Its function is as follows. Core subunit of the mitochondrial membrane respiratory chain NADH dehydrogenase (Complex I) which catalyzes electron transfer from NADH through the respiratory chain, using ubiquinone as an electron acceptor. Essential for the catalytic activity and assembly of complex I. This Sylvisorex granti (Grant's forest shrew) protein is NADH-ubiquinone oxidoreductase chain 2.